Here is a 712-residue protein sequence, read N- to C-terminus: Cyclolysin secretion/processing ATP-binding protein CyaB (712 aa).

The 122-residue stretch at 7–128 folds into the Peptidase C39 domain; the sequence is QCASVPDSGL…ALWAGELLLC (122 aa). The 283-residue stretch at 157–439 folds into the ABC transmembrane type-1 domain; that stretch reads IGEVLLISLV…LAQLWNDFQQ (283 aa). The next 6 membrane-spanning stretches (helical) occupy residues 160–180, 194–214, 272–292, 298–318, 367–387, and 390–410; these read VLLI…FFQV, LNVI…LTGI, AVTV…MFFY, LVVL…TPVL, VAAG…VTLI, and LVAL…RMTV. The ABC transporter domain maps to 471–706; sequence IELDRVSFRY…GGLYARLQAL (236 aa). 505-512 serves as a coordination point for ATP; sequence GRSGSGKS.

Belongs to the ABC transporter superfamily. Cyclolysin exporter (TC 3.A.1.109.2) family.

It is found in the cell membrane. Its function is as follows. Involved in the export of calmodulin-sensitive adenylate cyclase-hemolysin (cyclolysin). The polypeptide is Cyclolysin secretion/processing ATP-binding protein CyaB (cyaB) (Bordetella pertussis (strain Tohama I / ATCC BAA-589 / NCTC 13251)).